The sequence spans 766 residues: Leucine-rich repeat and fibronectin type III domain-containing protein 1 (766 aa).

The N-terminal stretch at 1 to 31 (MAPGPFSSGLLSPPPAALPFLLLLWAGASRG) is a signal peptide. In terms of domain architecture, LRRNT spans 32–65 (QPCPGRCICQNVAPTLTMLCAKTGLLFVPPAIDR). Topologically, residues 32–536 (QPCPGRCICQ…LRAHFLGGTM (505 aa)) are extracellular. LRR repeat units follow at residues 66-87 (RVVE…DFAN), 90-111 (SLVH…AFAD), 114-135 (ALRA…QLRG), 138-159 (NLRH…AFDA), 163-184 (TVED…AVGQ), 187-208 (NLNT…TFVQ), and 211-232 (KLVR…GLFL). Asn-87 is a glycosylation site (N-linked (GlcNAc...) asparagine). The LRRCT domain occupies 252-298 (NPLHCNCELLWLRRLTREDDLETCATPEHLTDRYFWSIPEEEFLCEP). In terms of domain architecture, Ig-like spans 299-386 (PLITRQAGGR…GEATAPVEVC (88 aa)). A disulfide bridge connects residues Cys-321 and Cys-370. Asn-343 is a glycosylation site (N-linked (GlcNAc...) asparagine). Residues 397 to 422 (PAAPPPLTEPGSSDIATPGRPGANDS) are disordered. The Fibronectin type-III domain occupies 424–520 (TERRLVAAEL…GCVQFTTAGD (97 aa)). A helical membrane pass occupies residues 537–557 (IIAIGGVIVASVLVFIVLLMI). The Cytoplasmic segment spans residues 558–766 (RYKVYGDGDS…STEWMLESTV (209 aa)). Disordered stretches follow at residues 568-601 (RRIK…PPAP) and 646-742 (CLLP…GEDG). Position 713 is a phosphoserine (Ser-713). The span at 714–727 (YPRRARRTKRHRST) shows a compositional bias: basic residues.

The protein belongs to the LRFN family. In terms of assembly, forms heteromeric complexes with LRFN2, LRFN4 and LRFN5; binding to LRFN2 and LRFN5 may be weaker than that to LRFN4. Also interacts with LRFN3. Forms homomeric complexes, but not across cell junctions. Interacts with DLG1, DLG2 and DLG4, but not with MAGI2, not CASK. Interacts with DLG3. Interacts with 2 AMPA receptor subunits GRIA1 and GRIA2 and NMDA receptor subunit GRIN1. In terms of processing, glycosylated. As to expression, mainly expressed in brain (at protein level) and testis. In brain, found in cerebral cortex (including pyramidal neurons), hippocampus (including CA3 and CA1 neurons), dentate gyrus, cerebellum (including Purkinje neurons) (at protein level) (at protein level). Also expressed in the olfactory bulb.

The protein localises to the membrane. Its subcellular location is the synapse. It is found in the postsynaptic density membrane. Promotes neurite outgrowth in hippocampal neurons. Involved in the regulation of the differentiation and maintenance of excitatory synapses. Induces the clustering of excitatory postsynaptic proteins, including DLG4, DLGAP1, GRIA1 and GRIN1. The protein is Leucine-rich repeat and fibronectin type III domain-containing protein 1 (Lrfn1) of Rattus norvegicus (Rat).